A 122-amino-acid polypeptide reads, in one-letter code: Large ribosomal subunit protein uL14 (122 aa).

It belongs to the universal ribosomal protein uL14 family. As to quaternary structure, part of the 50S ribosomal subunit. Forms a cluster with proteins L3 and L19. In the 70S ribosome, L14 and L19 interact and together make contacts with the 16S rRNA in bridges B5 and B8.

Its function is as follows. Binds to 23S rRNA. Forms part of two intersubunit bridges in the 70S ribosome. This Herpetosiphon aurantiacus (strain ATCC 23779 / DSM 785 / 114-95) protein is Large ribosomal subunit protein uL14.